The following is a 355-amino-acid chain: Holliday junction branch migration complex subunit RuvB (355 aa).

Positions 4–195 are large ATPase domain (RuvB-L); the sequence is TDKLTGADRL…FGIVARLEFY (192 aa). ATP-binding positions include L34, R35, G76, K79, T80, T81, 142 to 144, R185, Y195, and R232; that span reads EDY. T80 contributes to the Mg(2+) binding site. Positions 196 to 266 are small ATPAse domain (RuvB-S); it reads TPDELARIVA…LADAALEMLD (71 aa). Residues 269–355 form a head domain (RuvB-H) region; that stretch reads SVGFDLMDRK…DGGADLAEGL (87 aa). Positions 305, 324, and 329 each coordinate DNA.

The protein belongs to the RuvB family. Homohexamer. Forms an RuvA(8)-RuvB(12)-Holliday junction (HJ) complex. HJ DNA is sandwiched between 2 RuvA tetramers; dsDNA enters through RuvA and exits via RuvB. An RuvB hexamer assembles on each DNA strand where it exits the tetramer. Each RuvB hexamer is contacted by two RuvA subunits (via domain III) on 2 adjacent RuvB subunits; this complex drives branch migration. In the full resolvosome a probable DNA-RuvA(4)-RuvB(12)-RuvC(2) complex forms which resolves the HJ.

The protein resides in the cytoplasm. The catalysed reaction is ATP + H2O = ADP + phosphate + H(+). The RuvA-RuvB-RuvC complex processes Holliday junction (HJ) DNA during genetic recombination and DNA repair, while the RuvA-RuvB complex plays an important role in the rescue of blocked DNA replication forks via replication fork reversal (RFR). RuvA specifically binds to HJ cruciform DNA, conferring on it an open structure. The RuvB hexamer acts as an ATP-dependent pump, pulling dsDNA into and through the RuvAB complex. RuvB forms 2 homohexamers on either side of HJ DNA bound by 1 or 2 RuvA tetramers; 4 subunits per hexamer contact DNA at a time. Coordinated motions by a converter formed by DNA-disengaged RuvB subunits stimulates ATP hydrolysis and nucleotide exchange. Immobilization of the converter enables RuvB to convert the ATP-contained energy into a lever motion, pulling 2 nucleotides of DNA out of the RuvA tetramer per ATP hydrolyzed, thus driving DNA branch migration. The RuvB motors rotate together with the DNA substrate, which together with the progressing nucleotide cycle form the mechanistic basis for DNA recombination by continuous HJ branch migration. Branch migration allows RuvC to scan DNA until it finds its consensus sequence, where it cleaves and resolves cruciform DNA. This chain is Holliday junction branch migration complex subunit RuvB, found in Cupriavidus metallidurans (strain ATCC 43123 / DSM 2839 / NBRC 102507 / CH34) (Ralstonia metallidurans).